Here is a 96-residue protein sequence, read N- to C-terminus: uncharacterized protein (96 aa).

Positions 1–15 are cleaved as a signal peptide; it reads MRLFILLVALFVICA.

This is an uncharacterized protein from Caenorhabditis elegans.